Here is a 428-residue protein sequence, read N- to C-terminus: GTPase Obg (428 aa).

An Obg domain is found at M1–L158. The disordered stretch occupies residues K118–P145. Residues A159–E329 enclose the OBG-type G domain. Residues G165–S172, F190–V194, D212–G215, N282–D285, and S310–I312 each bind GTP. S172 and T192 together coordinate Mg(2+). An OCT domain is found at R350–D428.

It belongs to the TRAFAC class OBG-HflX-like GTPase superfamily. OBG GTPase family. Monomer. The cofactor is Mg(2+).

The protein localises to the cytoplasm. In terms of biological role, an essential GTPase which binds GTP, GDP and possibly (p)ppGpp with moderate affinity, with high nucleotide exchange rates and a fairly low GTP hydrolysis rate. Plays a role in control of the cell cycle, stress response, ribosome biogenesis and in those bacteria that undergo differentiation, in morphogenesis control. The protein is GTPase Obg of Bacillus pumilus (strain SAFR-032).